The primary structure comprises 152 residues: Superoxide dismutase [Cu-Zn] 1 (152 aa).

Cu cation-binding residues include histidine 45, histidine 47, and histidine 62. Cysteines 56 and 145 form a disulfide. Residues histidine 62, histidine 70, histidine 79, and aspartate 82 each coordinate Zn(2+). Position 119 (histidine 119) interacts with Cu cation.

Belongs to the Cu-Zn superoxide dismutase family. As to quaternary structure, homodimer. The cofactor is Cu cation. Zn(2+) serves as cofactor.

It localises to the cytoplasm. It carries out the reaction 2 superoxide + 2 H(+) = H2O2 + O2. Functionally, destroys radicals which are normally produced within the cells and which are toxic to biological systems. The protein is Superoxide dismutase [Cu-Zn] 1 (SODCC.1) of Mesembryanthemum crystallinum (Common ice plant).